The following is a 421-amino-acid chain: Phosphoribosylamine--glycine ligase (421 aa).

The ATP-grasp domain maps to 108 to 314 (KEIMVKYNVP…FAQNIDDIMM (207 aa)). 134–195 (IEEQGAPIVV…EEFLDGEEFS (62 aa)) serves as a coordination point for ATP. Residues Glu284 and Asn286 each coordinate Mg(2+).

The protein belongs to the GARS family. It depends on Mg(2+) as a cofactor. The cofactor is Mn(2+).

It catalyses the reaction 5-phospho-beta-D-ribosylamine + glycine + ATP = N(1)-(5-phospho-beta-D-ribosyl)glycinamide + ADP + phosphate + H(+). The protein operates within purine metabolism; IMP biosynthesis via de novo pathway; N(1)-(5-phospho-D-ribosyl)glycinamide from 5-phospho-alpha-D-ribose 1-diphosphate: step 2/2. The protein is Phosphoribosylamine--glycine ligase of Streptococcus pyogenes serotype M3 (strain SSI-1).